A 247-amino-acid polypeptide reads, in one-letter code: Carboxy-S-adenosyl-L-methionine synthase (247 aa).

S-adenosyl-L-methionine is bound by residues Tyr39, 64-66 (GCS), 89-90 (DN), 117-118 (DI), Asn132, and Arg199.

It belongs to the class I-like SAM-binding methyltransferase superfamily. Cx-SAM synthase family. As to quaternary structure, homodimer.

It carries out the reaction prephenate + S-adenosyl-L-methionine = carboxy-S-adenosyl-L-methionine + 3-phenylpyruvate + H2O. In terms of biological role, catalyzes the conversion of S-adenosyl-L-methionine (SAM) to carboxy-S-adenosyl-L-methionine (Cx-SAM). This chain is Carboxy-S-adenosyl-L-methionine synthase, found in Salmonella arizonae (strain ATCC BAA-731 / CDC346-86 / RSK2980).